Reading from the N-terminus, the 352-residue chain is Maleylacetate reductase (352 aa).

The protein belongs to the iron-containing alcohol dehydrogenase family.

The enzyme catalyses 3-oxoadipate + NAD(+) = maleylacetate + NADH + H(+). The catalysed reaction is 3-oxoadipate + NADP(+) = maleylacetate + NADPH + H(+). It participates in aromatic compound metabolism; 3-chlorocatechol degradation. The protein is Maleylacetate reductase (clcE) of Pseudomonas knackmussii (strain DSM 6978 / CCUG 54928 / LMG 23759 / B13).